The chain runs to 82 residues: MDLLLAIVLIVLAFLGGALGGMYLVRKQIEKEFADNPRLNAEAVRTLLSANGQKPSEAKVQQVYHQIIRQQKAALANNKKKK.

The chain crosses the membrane as a helical span at residues 5–25; it reads LAIVLIVLAFLGGALGGMYLV.

It belongs to the UPF0154 family.

The protein resides in the cell membrane. The sequence is that of UPF0154 protein SPD_1662 from Streptococcus pneumoniae serotype 2 (strain D39 / NCTC 7466).